Consider the following 335-residue polypeptide: uncharacterized protein (335 aa).

Residues 201–236 (GPMAKNKARRKEDNYDTHNCDDANQDKKEEAEGKNT) are disordered. Residues 210–235 (RKEDNYDTHNCDDANQDKKEEAEGKN) are compositionally biased toward basic and acidic residues.

In terms of biological role, dispensable for normal development and fertility. This is an uncharacterized protein from Homo sapiens (Human).